Consider the following 477-residue polypeptide: Ribulose bisphosphate carboxylase large chain (477 aa).

Positions 1–2 are excised as a propeptide; the sequence is MS. At Pro-3 the chain carries N-acetylproline. Asn-123 and Thr-173 together coordinate substrate. Lys-175 functions as the Proton acceptor in the catalytic mechanism. Lys-177 contributes to the substrate binding site. Mg(2+) is bound by residues Lys-201, Asp-203, and Glu-204. The residue at position 201 (Lys-201) is an N6-carboxylysine. His-294 (proton acceptor) is an active-site residue. 3 residues coordinate substrate: Arg-295, His-327, and Ser-379.

It belongs to the RuBisCO large chain family. Type I subfamily. As to quaternary structure, heterohexadecamer of 8 large chains and 8 small chains; disulfide-linked. The disulfide link is formed within the large subunit homodimers. Mg(2+) is required as a cofactor. The disulfide bond which can form between Cys-247 in the large chain dimeric partners within the hexadecamer appears to be associated with oxidative stress and protein turnover.

It localises to the plastid. It is found in the chloroplast. It carries out the reaction 2 (2R)-3-phosphoglycerate + 2 H(+) = D-ribulose 1,5-bisphosphate + CO2 + H2O. The enzyme catalyses D-ribulose 1,5-bisphosphate + O2 = 2-phosphoglycolate + (2R)-3-phosphoglycerate + 2 H(+). Its function is as follows. RuBisCO catalyzes two reactions: the carboxylation of D-ribulose 1,5-bisphosphate, the primary event in carbon dioxide fixation, as well as the oxidative fragmentation of the pentose substrate in the photorespiration process. Both reactions occur simultaneously and in competition at the same active site. The sequence is that of Ribulose bisphosphate carboxylase large chain (rbcL) from Triticum aestivum (Wheat).